A 447-amino-acid chain; its full sequence is 26S proteasome non-ATPase regulatory subunit 12 (447 aa).

Residues 1 to 23 (MTIGLEPAVSSKTKDKMEQDLSP) form a disordered region. The region spanning 240-411 (NYIEIARCYL…GIATFTTTND (172 aa)) is the PCI domain.

This sequence belongs to the proteasome subunit p55 family.

Acts as a regulatory subunit of the 26S proteasome which is involved in the ATP-dependent degradation of ubiquitinated proteins. In Dictyostelium discoideum (Social amoeba), this protein is 26S proteasome non-ATPase regulatory subunit 12 (psmD12).